We begin with the raw amino-acid sequence, 598 residues long: Aspartate--tRNA(Asp/Asn) ligase (598 aa).

Glutamate 177 provides a ligand contact to L-aspartate. Residues 201–204 (QLFK) are aspartate. Arginine 223 is an L-aspartate binding site. Residues 223 to 225 (RDE) and glutamine 232 contribute to the ATP site. Histidine 456 contributes to the L-aspartate binding site. Glutamate 493 contributes to the ATP binding site. Arginine 500 is a binding site for L-aspartate. 545–548 (GVDR) serves as a coordination point for ATP.

This sequence belongs to the class-II aminoacyl-tRNA synthetase family. Type 1 subfamily. Homodimer.

It is found in the cytoplasm. The catalysed reaction is tRNA(Asx) + L-aspartate + ATP = L-aspartyl-tRNA(Asx) + AMP + diphosphate. Functionally, aspartyl-tRNA synthetase with relaxed tRNA specificity since it is able to aspartylate not only its cognate tRNA(Asp) but also tRNA(Asn). Reaction proceeds in two steps: L-aspartate is first activated by ATP to form Asp-AMP and then transferred to the acceptor end of tRNA(Asp/Asn). This chain is Aspartate--tRNA(Asp/Asn) ligase, found in Prochlorococcus marinus subsp. pastoris (strain CCMP1986 / NIES-2087 / MED4).